Reading from the N-terminus, the 123-residue chain is Periplasmic [Fe] hydrogenase small subunit (123 aa).

A signal peptide (tat-type signal) is located at residues 1–34 (MQIASITRRGFLKVACVTTGAALIGIRMTGKAVA). The segment at 103-123 (TTAGKLPNPRASEFEGPYPYE) is disordered.

As to quaternary structure, heterodimer of a large and a small subunit. In terms of processing, predicted to be exported by the Tat system. The position of the signal peptide cleavage has been experimentally proven.

Its subcellular location is the periplasm. It catalyses the reaction H2 + 2 oxidized [2Fe-2S]-[ferredoxin] = 2 reduced [2Fe-2S]-[ferredoxin] + 2 H(+). In terms of biological role, may be involved in hydrogen uptake for the reduction of sulfate to hydrogen sulfide in an electron transport chain. Cytochrome c3 is likely to be the physiological electron carrier for the enzyme. This Nitratidesulfovibrio vulgaris (strain ATCC 29579 / DSM 644 / CCUG 34227 / NCIMB 8303 / VKM B-1760 / Hildenborough) (Desulfovibrio vulgaris) protein is Periplasmic [Fe] hydrogenase small subunit (hydB).